Consider the following 577-residue polypeptide: Arginine--tRNA ligase (577 aa).

The 'HIGH' region signature appears at 122 to 132 (PNVAKEMHVGH).

It belongs to the class-I aminoacyl-tRNA synthetase family. Monomer.

The protein localises to the cytoplasm. It catalyses the reaction tRNA(Arg) + L-arginine + ATP = L-arginyl-tRNA(Arg) + AMP + diphosphate. The chain is Arginine--tRNA ligase from Shigella flexneri serotype 5b (strain 8401).